The sequence spans 382 residues: 1-deoxy-D-xylulose 5-phosphate reductoisomerase (382 aa).

Positions 10, 11, 12, 13, 36, and 122 each coordinate NADPH. K123 contacts 1-deoxy-D-xylulose 5-phosphate. E124 contributes to the NADPH binding site. D148 provides a ligand contact to Mn(2+). 1-deoxy-D-xylulose 5-phosphate contacts are provided by S149, E150, S174, and H197. E150 provides a ligand contact to Mn(2+). G203 provides a ligand contact to NADPH. S210, N215, K216, and E219 together coordinate 1-deoxy-D-xylulose 5-phosphate. E219 is a binding site for Mn(2+).

It belongs to the DXR family. The cofactor is Mg(2+). Mn(2+) serves as cofactor.

The catalysed reaction is 2-C-methyl-D-erythritol 4-phosphate + NADP(+) = 1-deoxy-D-xylulose 5-phosphate + NADPH + H(+). The protein operates within isoprenoid biosynthesis; isopentenyl diphosphate biosynthesis via DXP pathway; isopentenyl diphosphate from 1-deoxy-D-xylulose 5-phosphate: step 1/6. In terms of biological role, catalyzes the NADPH-dependent rearrangement and reduction of 1-deoxy-D-xylulose-5-phosphate (DXP) to 2-C-methyl-D-erythritol 4-phosphate (MEP). This is 1-deoxy-D-xylulose 5-phosphate reductoisomerase from Chlorobium chlorochromatii (strain CaD3).